We begin with the raw amino-acid sequence, 552 residues long: Ribulokinase (552 aa).

Belongs to the ribulokinase family.

The catalysed reaction is D-ribulose + ATP = D-ribulose 5-phosphate + ADP + H(+). It carries out the reaction L-ribulose + ATP = L-ribulose 5-phosphate + ADP + H(+). The protein operates within carbohydrate degradation; L-arabinose degradation via L-ribulose; D-xylulose 5-phosphate from L-arabinose (bacterial route): step 2/3. This Bacillus licheniformis (strain ATCC 14580 / DSM 13 / JCM 2505 / CCUG 7422 / NBRC 12200 / NCIMB 9375 / NCTC 10341 / NRRL NRS-1264 / Gibson 46) protein is Ribulokinase.